We begin with the raw amino-acid sequence, 404 residues long: S-adenosylmethionine synthase (404 aa).

ATP is bound at residue His18. Residue Asp20 participates in Mg(2+) binding. Glu46 is a binding site for K(+). 2 residues coordinate L-methionine: Glu59 and Gln102. The segment at Gln102 to His112 is flexible loop. Residues Asp178–Lys180, Lys249–Phe250, Asp258, Arg264–Lys265, Ala281, and Lys285 each bind ATP. Residue Asp258 participates in L-methionine binding. L-methionine is bound at residue Lys289.

Belongs to the AdoMet synthase family. In terms of assembly, homotetramer; dimer of dimers. Requires Mg(2+) as cofactor. K(+) serves as cofactor.

It localises to the cytoplasm. It carries out the reaction L-methionine + ATP + H2O = S-adenosyl-L-methionine + phosphate + diphosphate. It participates in amino-acid biosynthesis; S-adenosyl-L-methionine biosynthesis; S-adenosyl-L-methionine from L-methionine: step 1/1. In terms of biological role, catalyzes the formation of S-adenosylmethionine (AdoMet) from methionine and ATP. The overall synthetic reaction is composed of two sequential steps, AdoMet formation and the subsequent tripolyphosphate hydrolysis which occurs prior to release of AdoMet from the enzyme. This Rhodococcus jostii (strain RHA1) protein is S-adenosylmethionine synthase.